The chain runs to 906 residues: Ribonucleoside-diphosphate reductase large subunit-like protein (906 aa).

2 disordered regions span residues 1–70 (MNPA…AGNT) and 89–129 (VSWR…LSTF). Over residues 98–109 (PDGTPSVLSLTR) the composition is skewed to polar residues.

The protein belongs to the ribonucleoside diphosphate reductase large chain family.

It localises to the virion. It is found in the host cytoplasm. Does not possess a ribonucleotide reductase activity. Betaherpesviruses probably use another strategy to expand the dNTP pool in a quiescent host cell. The polypeptide is Ribonucleoside-diphosphate reductase large subunit-like protein (Homo sapiens (Human)).